Consider the following 124-residue polypeptide: Large ribosomal subunit protein eL33 (124 aa).

Residue Ala-2 is modified to N-acetylalanine.

Belongs to the eukaryotic ribosomal protein eL33 family.

In Caenorhabditis elegans, this protein is Large ribosomal subunit protein eL33.